A 93-amino-acid polypeptide reads, in one-letter code: Small ribosomal subunit protein uS19 (93 aa).

The protein belongs to the universal ribosomal protein uS19 family.

Functionally, protein S19 forms a complex with S13 that binds strongly to the 16S ribosomal RNA. The polypeptide is Small ribosomal subunit protein uS19 (Symbiobacterium thermophilum (strain DSM 24528 / JCM 14929 / IAM 14863 / T)).